A 124-amino-acid polypeptide reads, in one-letter code: Biogenesis of lysosome-related organelles complex 1 subunit CNL1 (124 aa).

Residues M1–D20 are disordered. Residues I75–V98 adopt a coiled-coil conformation.

The protein belongs to the BLOC1S4 family. Component of the biogenesis of lysosome-related organelles complex-1 (BLOC-1).

The protein resides in the cytoplasm. Functionally, component of the biogenesis of lysosome-related organelles complex-1 (BLOC-1), a complex that is involved in endosomal cargo sorting. The sequence is that of Biogenesis of lysosome-related organelles complex 1 subunit CNL1 (CLN1) from Kluyveromyces lactis (strain ATCC 8585 / CBS 2359 / DSM 70799 / NBRC 1267 / NRRL Y-1140 / WM37) (Yeast).